The sequence spans 173 residues: MDLRKKIRIIDDFPKKGISFKDVTPILKDPKSMKHTTKEITKYLEDKNIDVIVGPEARGFLFGILVAQELDLGFVPVRKPGKLPFKTFSVDYALEYGLDRLEIHSDSIEKGQNVAVVDDLLATGGTVLGVTKLVEKIGGNVSALSFVIELTNLNGRDKLKGYNVQSLVKYDDL.

The protein belongs to the purine/pyrimidine phosphoribosyltransferase family. Homodimer.

The protein resides in the cytoplasm. It catalyses the reaction AMP + diphosphate = 5-phospho-alpha-D-ribose 1-diphosphate + adenine. Its pathway is purine metabolism; AMP biosynthesis via salvage pathway; AMP from adenine: step 1/1. In terms of biological role, catalyzes a salvage reaction resulting in the formation of AMP, that is energically less costly than de novo synthesis. The protein is Adenine phosphoribosyltransferase of Methanococcus vannielii (strain ATCC 35089 / DSM 1224 / JCM 13029 / OCM 148 / SB).